The chain runs to 271 residues: Repressed by EFG1 protein 1 (271 aa).

The first 19 residues, 1–19 (MKITNTLLNAAALLAVTEA), serve as a signal peptide directing secretion. Residues 59-118 (QLTSKTQDSTSPTTSSVNSLTSSSATSYVETTTPAPSSSTLTTSTISSSTASEDSDATPT) form a disordered region. The segment covering 67–118 (STSPTTSSVNSLTSSSATSYVETTTPAPSSSTLTTSTISSSTASEDSDATPT) has biased composition (low complexity). The SCP domain occupies 128 to 244 (LKEHNVKRAL…AWRQITVCEY (117 aa)). Residue asparagine 254 is glycosylated (N-linked (GlcNAc...) asparagine).

This sequence belongs to the CRISP family.

It localises to the secreted. The protein localises to the cell wall. Functionally, cell wall protein involved in cell wall integrity and which plays a role in virulence. In Candida albicans (strain SC5314 / ATCC MYA-2876) (Yeast), this protein is Repressed by EFG1 protein 1 (RBE1).